The chain runs to 411 residues: Phospholipase ABHD3 (411 aa).

A helical; Signal-anchor for type II membrane protein membrane pass occupies residues V25 to A45. The region spanning P140 to I233 is the AB hydrolase-1 domain. Active-site charge relay system residues include S220, D346, and H375.

Belongs to the AB hydrolase superfamily. AB hydrolase 4 family. Widely expressed with higher expression in liver.

It is found in the membrane. The catalysed reaction is a 1,2-diacyl-sn-glycero-3-phosphocholine + H2O = a 1-acyl-sn-glycero-3-phosphocholine + a fatty acid + H(+). It catalyses the reaction a 1,2-diacyl-sn-glycero-3-phosphocholine + H2O = a 2-acyl-sn-glycero-3-phosphocholine + a fatty acid + H(+). The enzyme catalyses 1-tetradecanoyl-2-(9Z,12Z-octadecadienoyl)-sn-glycero-3-phosphocholine + H2O = 2-(9Z,12Z-octadecadienoyl)-sn-glycero-3-phosphocholine + tetradecanoate + H(+). It carries out the reaction 1-tetradecanoyl-2-(9Z,12Z-octadecadienoyl)-sn-glycero-3-phosphocholine + H2O = 1-tetradecanoyl-sn-glycero-3-phosphocholine + (9Z,12Z)-octadecadienoate + H(+). The catalysed reaction is 1-tetradecanoyl-2-(5Z,8Z,11Z,14Z-eicosatetraenoyl)-sn-glycero-3-phosphocholine + H2O = 2-(5Z,8Z,11Z,14Z)-eicosatetraenoyl-sn-glycero-3-phosphocholine + tetradecanoate + H(+). It catalyses the reaction 1-tetradecanoyl-2-(4Z,7Z,10Z,13Z,16Z,19Z-docosahexaenoyl)-sn-glycero-3-phosphocholine + H2O = 2-(4Z,7Z,10Z,13Z,16Z,19Z-docosahexaenoyl)-sn-glycero-3-phosphocholine + tetradecanoate + H(+). The enzyme catalyses 1,2-ditetradecanoyl-sn-glycero-3-phosphocholine + H2O = 2-tetradecanoyl-sn-glycero-3-phosphocholine + tetradecanoate + H(+). It carries out the reaction 1-octadecanoyl-2-acetyl-sn-glycero-3-phosphocholine + H2O = 1-octadecanoyl-sn-glycero-3-phosphocholine + acetate + H(+). The catalysed reaction is 1,2-ditetradecanoyl-sn-glycero-3-phosphocholine + H2O = 1-tetradecanoyl-sn-glycero-3-phosphocholine + tetradecanoate + H(+). It catalyses the reaction 1-octadecanoyl-2-pentanoyl-sn-glycero-3-phosphocholine + H2O = pentanoate + 1-octadecanoyl-sn-glycero-3-phosphocholine + H(+). The enzyme catalyses 1-octadecanoyl-2-hexanoyl-sn-glycero-3-phosphocholine + H2O = hexanoate + 1-octadecanoyl-sn-glycero-3-phosphocholine + H(+). It carries out the reaction 1-octadecanoyl-2-octanoyl-sn-glycero-3-phosphocholine + H2O = 1-octadecanoyl-sn-glycero-3-phosphocholine + octanoate + H(+). The catalysed reaction is 1-octadecanoyl-2-nonanoyl-sn-glycero-3-phosphocholine + H2O = nonanoate + 1-octadecanoyl-sn-glycero-3-phosphocholine + H(+). It catalyses the reaction 1-O-hexadecyl-2-nonadioyl-sn-glycero-3-phosphocholine + H2O = nonanedioate + 1-O-hexadecyl-sn-glycero-3-phosphocholine + H(+). The enzyme catalyses 1-hexadecanoyl-2-nonadioyl-sn-glycero-3-phosphocholine + H2O = nonanedioate + 1-hexadecanoyl-sn-glycero-3-phosphocholine + H(+). It carries out the reaction 1-hexadecanoyl-2-(9-oxononanoyl)-sn-glycero-3-phosphocholine + H2O = 9-oxononanoate + 1-hexadecanoyl-sn-glycero-3-phosphocholine + H(+). The catalysed reaction is 1-hexadecanoyl-2-(5-oxopentanoyl)-sn-glycero-3-phosphocholine + H2O = 5-oxopentanoate + 1-hexadecanoyl-sn-glycero-3-phosphocholine + H(+). It catalyses the reaction 1-hexadecanoyl-2-glutaroyl-sn-glycero-3-phosphocholine + H2O = glutarate + 1-hexadecanoyl-sn-glycero-3-phosphocholine + H(+). The enzyme catalyses 1-O-hexadecyl-2-acetyl-sn-glycero-3-phosphocholine + H2O = 1-O-hexadecyl-sn-glycero-3-phosphocholine + acetate + H(+). Its function is as follows. Phospholipase that may play a role in phospholipids remodeling. May selectively cleave myristate (C14)-containing phosphatidylcholines through its predominant phospholipase 1 activity, cleaving preferentially acyl groups in sn1 position. In parallel, may have a minor phospholipase 2 activity acting on acyl groups in position sn2. In addition to (C14)-containing phosphatidylcholines, may also act on other medium-chain-containing and oxidatively truncated phospholipids. The sequence is that of Phospholipase ABHD3 from Mus musculus (Mouse).